The chain runs to 98 residues: NADH-ubiquinone oxidoreductase chain 4L (98 aa).

3 helical membrane-spanning segments follow: residues 1-21 (MPSI…GTLI), 26-46 (LMSS…LTSL), and 61-81 (IILL…LVMV).

The protein belongs to the complex I subunit 4L family. As to quaternary structure, core subunit of respiratory chain NADH dehydrogenase (Complex I) which is composed of 45 different subunits.

Its subcellular location is the mitochondrion inner membrane. It catalyses the reaction a ubiquinone + NADH + 5 H(+)(in) = a ubiquinol + NAD(+) + 4 H(+)(out). Functionally, core subunit of the mitochondrial membrane respiratory chain NADH dehydrogenase (Complex I) which catalyzes electron transfer from NADH through the respiratory chain, using ubiquinone as an electron acceptor. Part of the enzyme membrane arm which is embedded in the lipid bilayer and involved in proton translocation. This Otolemur crassicaudatus (Brown greater galago) protein is NADH-ubiquinone oxidoreductase chain 4L (MT-ND4L).